We begin with the raw amino-acid sequence, 394 residues long: Flavohemoprotein (394 aa).

A Globin domain is found at 1-136 (MISQQTIDIV…LANVFITREE (136 aa)). His-85 serves as a coordination point for heme b. Active-site charge relay system residues include Tyr-95 and Glu-135. Positions 147–394 (GGWRGTREFT…YECFGPHKVL (248 aa)) are reductase. Residues 150 to 255 (RGTREFTLIE…AAPAGDFFLD (106 aa)) form the FAD-binding FR-type domain. Residues Tyr-188 and 204–207 (RQYS) contribute to the FAD site. 268 to 273 (GVGLTP) serves as a coordination point for NADP(+). 387-390 (CFGP) serves as a coordination point for FAD.

This sequence belongs to the globin family. Two-domain flavohemoproteins subfamily. The protein in the C-terminal section; belongs to the flavoprotein pyridine nucleotide cytochrome reductase family. The cofactor is heme b. Requires FAD as cofactor.

It carries out the reaction 2 nitric oxide + NADPH + 2 O2 = 2 nitrate + NADP(+) + H(+). It catalyses the reaction 2 nitric oxide + NADH + 2 O2 = 2 nitrate + NAD(+) + H(+). Its function is as follows. Is involved in NO detoxification in an aerobic process, termed nitric oxide dioxygenase (NOD) reaction that utilizes O(2) and NAD(P)H to convert NO to nitrate, which protects the bacterium from various noxious nitrogen compounds. Therefore, plays a central role in the inducible response to nitrosative stress. This is Flavohemoprotein from Photobacterium profundum (strain SS9).